Here is a 441-residue protein sequence, read N- to C-terminus: GTPase Der (441 aa).

EngA-type G domains are found at residues 4 to 169 (PVVA…PDSS) and 178 to 353 (PRVA…ENNS). Residues 10–17 (GRPNVGKS), 57–61 (DTGGI), 120–123 (NKVD), 184–191 (GKPNVGKS), 231–235 (DTAGL), and 296–299 (NKWD) contribute to the GTP site. One can recognise a KH-like domain in the interval 354–438 (MRVATGVLNE…ALKFITRERK (85 aa)).

The protein belongs to the TRAFAC class TrmE-Era-EngA-EngB-Septin-like GTPase superfamily. EngA (Der) GTPase family. Associates with the 50S ribosomal subunit.

Its function is as follows. GTPase that plays an essential role in the late steps of ribosome biogenesis. In Agathobacter rectalis (strain ATCC 33656 / DSM 3377 / JCM 17463 / KCTC 5835 / VPI 0990) (Eubacterium rectale), this protein is GTPase Der.